A 203-amino-acid chain; its full sequence is tRNA (cytidine(56)-2'-O)-methyltransferase (203 aa).

S-adenosyl-L-methionine-binding positions include Leu-80, 109-113 (GAEKV), and 127-134 (IGNQPHSE). The disordered stretch occupies residues 178-203 (AEQDKAEGKATPGKNWENSGFTGDNP). Polar residues predominate over residues 193–203 (WENSGFTGDNP).

The protein belongs to the aTrm56 family. In terms of assembly, homodimer.

The protein localises to the cytoplasm. It carries out the reaction cytidine(56) in tRNA + S-adenosyl-L-methionine = 2'-O-methylcytidine(56) in tRNA + S-adenosyl-L-homocysteine + H(+). Its function is as follows. Specifically catalyzes the AdoMet-dependent 2'-O-ribose methylation of cytidine at position 56 in tRNAs. This Pyrococcus horikoshii (strain ATCC 700860 / DSM 12428 / JCM 9974 / NBRC 100139 / OT-3) protein is tRNA (cytidine(56)-2'-O)-methyltransferase.